The following is a 384-amino-acid chain: Galactokinase (384 aa).

34–37 (EHTD) lines the substrate pocket. 123-129 (SSGLSSS) lines the ATP pocket. The Mg(2+) site is built by serine 129 and glutamate 161. Aspartate 173 (proton acceptor) is an active-site residue. Residue tyrosine 222 coordinates substrate.

The protein belongs to the GHMP kinase family. GalK subfamily.

The protein localises to the cytoplasm. It catalyses the reaction alpha-D-galactose + ATP = alpha-D-galactose 1-phosphate + ADP + H(+). It functions in the pathway carbohydrate metabolism; galactose metabolism. Catalyzes the transfer of the gamma-phosphate of ATP to D-galactose to form alpha-D-galactose-1-phosphate (Gal-1-P). This chain is Galactokinase, found in Actinobacillus pleuropneumoniae serotype 5b (strain L20).